Reading from the N-terminus, the 406-residue chain is GTPase Obg (406 aa).

Residues 1–159 (MKFVDEVSIH…RDLKLELKVL (159 aa)) form the Obg domain. Residues 127-148 (NTRFKSSTNRAPRQTTPGKPGE) are disordered. Residues 129–143 (RFKSSTNRAPRQTTP) are compositionally biased toward polar residues. Positions 160-334 (ADVGLLGLPN…LSQDIMRYLD (175 aa)) constitute an OBG-type G domain. GTP contacts are provided by residues 166–173 (GLPNAGKS), 191–195 (FTTLV), 213–216 (DIPG), 283–286 (NKMD), and 315–317 (SAL). S173 and T193 together coordinate Mg(2+). The interval 378–406 (GLKNAGAADDDDFDDEEDDGDGPEIFYVP) is disordered. Positions 385–399 (ADDDDFDDEEDDGDG) are enriched in acidic residues.

It belongs to the TRAFAC class OBG-HflX-like GTPase superfamily. OBG GTPase family. In terms of assembly, monomer. It depends on Mg(2+) as a cofactor.

The protein resides in the cytoplasm. Functionally, an essential GTPase which binds GTP, GDP and possibly (p)ppGpp with moderate affinity, with high nucleotide exchange rates and a fairly low GTP hydrolysis rate. Plays a role in control of the cell cycle, stress response, ribosome biogenesis and in those bacteria that undergo differentiation, in morphogenesis control. This chain is GTPase Obg, found in Pseudomonas paraeruginosa (strain DSM 24068 / PA7) (Pseudomonas aeruginosa (strain PA7)).